Here is a 77-residue protein sequence, read N- to C-terminus: Large ribosomal subunit protein uL24 (77 aa).

Residues 42–61 are disordered; it reads KKHQKPSQTNANGGVVESEG.

Belongs to the universal ribosomal protein uL24 family. In terms of assembly, part of the 50S ribosomal subunit.

Its function is as follows. One of two assembly initiator proteins, it binds directly to the 5'-end of the 23S rRNA, where it nucleates assembly of the 50S subunit. In terms of biological role, one of the proteins that surrounds the polypeptide exit tunnel on the outside of the subunit. The polypeptide is Large ribosomal subunit protein uL24 (Lactobacillus acidophilus (strain ATCC 700396 / NCK56 / N2 / NCFM)).